The chain runs to 152 residues: Antiholin-like protein LrgA (152 aa).

4 helical membrane passes run 23 to 43, 45 to 65, 77 to 97, and 108 to 128; these read YSIFQQALTIAVILLISKIIE, FMPIPMPASVIGLVLLFIALC, VGTALTNNIGFLFVPAGISVI, and ILIILLIIISTLLLLICTGFS.

The protein belongs to the CidA/LrgA family. LrgA subfamily.

The protein resides in the cell membrane. In terms of biological role, inhibits the expression or activity of extracellular murein hydrolases by interacting, possibly with LrgB, with the holin-like proteins CidA and/or CidB. The LrgAB and CidAB proteins may affect the proton motive force of the membrane. May be involved in programmed cell death (PCD), possibly triggering PCD in response to antibiotics and environmental stresses. In Staphylococcus epidermidis (strain ATCC 12228 / FDA PCI 1200), this protein is Antiholin-like protein LrgA.